Consider the following 752-residue polypeptide: Zinc finger BED domain-containing protein RICESLEEPER 3 (752 aa).

Residues 106-166 (RKKSVVWEHF…ASCPMLKNED (61 aa)) form a BED-type zinc finger. Zn(2+) is bound by residues cysteine 129, cysteine 132, histidine 153, and cysteine 159. The HATC (Hobo-Ac-Tam3) domain stretch occupies residues 647–733 (ELEQYLEEAL…EALFCAKDWL (87 aa)).

As to quaternary structure, homodimer.

It is found in the nucleus. Its function is as follows. Transposase-like protein that is essential for plant growth and development. May regulate global gene expression by recruiting other cellular factors. This Oryza sativa subsp. japonica (Rice) protein is Zinc finger BED domain-containing protein RICESLEEPER 3.